The sequence spans 382 residues: Ustilagic acid biosynthesis cluster protein orf2 (382 aa).

A compositionally biased stretch (polar residues) spans 1 to 20 (MLQEAKVSTHTSNPLSQSVP). Residues 1 to 22 (MLQEAKVSTHTSNPLSQSVPQY) form a disordered region.

The protein operates within secondary metabolite biosynthesis. Functionally, part of the gene cluster that mediates the biosynthesis of the glycolipid biosurfactant ustilagic acid (UA). UA is a secreted cellobiose glycolipid that is toxic for many microorganisms and confers biocontrol activity to U.maydis. UA consists of 15,16-dihydroxypalmitic or 2,15,16-trihydroxypalmitic acid, which is O-glycosidically linked to cellobiose at its terminal hydroxyl group. In addition, the cellobiose moiety is acetylated and acylated with a short-chain hydroxy fatty acid. UA biosynthesis starts with omega-hydroxylation of palmitic acid catalyzed by the cytochrome P450 monooxygenase cyp1. Terminal hydroxylation of palmitic acid precedes subterminal hydroxylation catalyzed by the cytochrome P450 monooxygenase cyp2. Sequential glucosylation of the hydroxy fatty acid is probably catalyzed by the glycosyltransferase ugt1. The cellobiose lipid is further decorated by acetylation of the proximal glucose residue and by acylation with a short-chain beta-hydroxy fatty acid at the distal glucose residue. The acyltransferase uat1 may be a good candidate for catalyzing either acetylation or acylation of the cellobiose lipid. The fatty acid synthase fas2 may be involved in synthesis of the carbon backbone of the short-chain beta-hydroxy fatty acid esterified to the cellobiose disaccharide. The secreted UA consists of a mixture of both alpha-hydroxylated and non-hydroxylated glycolipids; therefore, alpha-hydroxylation of the long-chain fatty, catalyzed by the fatty acid hydroxylase ahd1, occurs late in UA biosynthesis and may be the last step before secretion. This Mycosarcoma maydis (Corn smut fungus) protein is Ustilagic acid biosynthesis cluster protein orf2.